Here is a 501-residue protein sequence, read N- to C-terminus: Aminoaldehyde dehydrogenase ALDH10A8, chloroplastic (501 aa).

Na(+) is bound by residues Asp-99 and Leu-189. NAD(+) contacts are provided by residues 238–243 (GSFATG) and 238–245 (GSFATGSK). Glu-260 serves as the catalytic Proton acceptor. Cys-294 and Glu-393 together coordinate NAD(+). The Nucleophile role is filled by Cys-294.

Belongs to the aldehyde dehydrogenase family. In terms of assembly, homodimer. Widely expressed.

It localises to the cytoplasm. The protein localises to the plastid. The protein resides in the chloroplast. It carries out the reaction 4-aminobutanal + NAD(+) + H2O = 4-aminobutanoate + NADH + 2 H(+). The catalysed reaction is 3-aminopropanal + NAD(+) + H2O = beta-alanine + NADH + 2 H(+). It catalyses the reaction 4-(trimethylamino)butanal + NAD(+) + H2O = 4-(trimethylamino)butanoate + NADH + 2 H(+). The enzyme catalyses 4-guanidinobutanal + NAD(+) + H2O = 4-guanidinobutanoate + NADH + 2 H(+). It carries out the reaction betaine aldehyde + NAD(+) + H2O = glycine betaine + NADH + 2 H(+). The protein operates within amine and polyamine biosynthesis; betaine biosynthesis via choline pathway; betaine from betaine aldehyde: step 1/1. Its function is as follows. Dehydrogenase that catalyzes the oxidation of several aminoaldehydes. Metabolizes and detoxifies aldehyde products of polyamine degradation to non-toxic amino acids. Catalyzes the oxidation of 4-aminobutanal and 3-aminopropanal to 4-aminobutanoate and beta-alanine, respectively. Production of 4-aminobutinoate by ALDH10A8 may confer tolerance to salt stress. Catalyzes the oxidation of 4-(trimethylamino)butanal and 4-guanidinobutanal to 4-trimethylammoniobutanoate and 4-guanidinobutanoate, respectively. Involved in glycine betaine biosynthesis. Catalyzes with low efficiency the oxidation of betaine aldehyde to glycine betaine. The polypeptide is Aminoaldehyde dehydrogenase ALDH10A8, chloroplastic (Arabidopsis thaliana (Mouse-ear cress)).